The chain runs to 382 residues: MSTWLLPENIADVLPSEARKIEELRRRLLDRFRSYGYEMVMPPLLEYLESLLTSGGNELRLRTFKLVDQVSGRTLGLRADMTPQVARIDAHLLNRQGVTRLCYAGPVLHTRPRGLHASREQLQIGAEIYGHAGLEADQEIQQLMLDALHLAGLKKIRLDLCHAGVLAALFARDAAAAGRGEALYEALAGKDVPRLNELTDDLGADTRAALRALPRLYGDASVLDEARRQLPALPEIARALDDLAHLASQVKDAEVAIDLADLRGYAYHSGAMFAAYVDGVPNAVAHGGRYDHVGQAYGRARPATGFSLDLREIARISPVEARGAAILAPWKQDDALRAAVGALRDAGEVVIQALPGHDHVLDEFACDRALVERDGAWVVEPR.

It belongs to the class-II aminoacyl-tRNA synthetase family. HisZ subfamily. As to quaternary structure, heteromultimer composed of HisG and HisZ subunits.

It is found in the cytoplasm. The protein operates within amino-acid biosynthesis; L-histidine biosynthesis; L-histidine from 5-phospho-alpha-D-ribose 1-diphosphate: step 1/9. Functionally, required for the first step of histidine biosynthesis. May allow the feedback regulation of ATP phosphoribosyltransferase activity by histidine. The chain is ATP phosphoribosyltransferase regulatory subunit from Burkholderia thailandensis (strain ATCC 700388 / DSM 13276 / CCUG 48851 / CIP 106301 / E264).